A 600-amino-acid polypeptide reads, in one-letter code: Rhesus-like glycoprotein B (600 aa).

Residues 1-16 are Cytoplasmic-facing; it reads MSKDEHKLPLSKRKES. A helical transmembrane segment spans residues 17–37; the sequence is IIFMMILFAFQVFMVVLFSVW. At 38 to 73 the chain is on the extracellular side; sequence VRYSKNEVNYSTLTPEQLQELEATGGVVQEEVTNIY. Residue N46 is glycosylated (N-linked (GlcNAc...) asparagine). The helical transmembrane segment at 74–94 threads the bilayer; sequence GYFRDINIMIFFGFGFLMTFL. Over 95–102 the chain is Cytoplasmic; the sequence is RRYGYSAL. The helical transmembrane segment at 103-123 threads the bilayer; sequence GYTFIISALVAQWSVLIYGFF. The Extracellular portion of the chain corresponds to 124–145; that stretch reads ETVDHKNDHGGDYASTFEMSQT. The chain crosses the membrane as a helical span at residues 146-166; that stretch reads VLLQGLFCAGAVMISYGAVLG. Topologically, residues 167 to 170 are cytoplasmic; sequence RVTP. The chain crosses the membrane as a helical span at residues 171-191; it reads LQMLVVGIFEPIFYFLNMFIG. At 192 to 199 the chain is on the extracellular side; it reads EMNLEAID. Residues 200 to 220 form a helical membrane-spanning segment; sequence VGGGMYIHLFGSVFGLTIAWF. The Cytoplasmic segment spans residues 221-240; sequence LTDKKSKDCEDNSPSYTGDY. Residues 241 to 261 form a helical membrane-spanning segment; the sequence is FAMAGTLFLWMMWPSFNAAIA. The Extracellular portion of the chain corresponds to 262-274; sequence PLGEPQFRAIANT. A helical transmembrane segment spans residues 275–295; the sequence is FLSLTASTIATFIVTRLFGHL. Over 296 to 303 the chain is Cytoplasmic; it reads GHKIDMVH. Residues 304 to 323 form a helical membrane-spanning segment; the sequence is VQNSSLAGGVVQGCLAHMNI. Residues 324–325 lie on the Extracellular side of the membrane; sequence NP. Residues 326 to 346 traverse the membrane as a helical segment; sequence GGAIGMGFLAGVISVIGYLFI. The Cytoplasmic portion of the chain corresponds to 347 to 361; it reads SPFLQRRFNIQDTCG. Residues 362–382 traverse the membrane as a helical segment; the sequence is IHNLHFMPGFIGSIAACIAAW. Residues 383–411 lie on the Extracellular side of the membrane; sequence KGLNDRSLYNPIEFNQIFRAGEDQARNNA. Residues 412 to 432 traverse the membrane as a helical segment; sequence AATFISIGIAIAGGLFVGMIL. Residues 433–600 lie on the Cytoplasmic side of the membrane; that stretch reads KALKKVGGLK…SSTNSPTSKV (168 aa). Positions 471-600 are disordered; that stretch reads NLPMPTTDNG…SSTNSPTSKV (130 aa). Over residues 498 to 510 the composition is skewed to basic and acidic residues; that stretch reads NKKENGYRRDLIR. Over residues 519–529 the composition is skewed to low complexity; the sequence is EQSTDSSYSDS. Residues 540-554 show a composition bias toward basic residues; that stretch reads RIRKLAKKSYRRSKK. Positions 555–566 are enriched in basic and acidic residues; it reads SHSEHQPQHQPE. The segment covering 571 to 580 has biased composition (low complexity); it reads NNNNNNNNNN. A compositionally biased stretch (polar residues) spans 581 to 600; sequence ATAETTDNGGSSTNSPTSKV.

It belongs to the ammonium transporter (TC 2.A.49) family. Rh subfamily.

The protein localises to the membrane. Functionally, may be a carbon dioxide/bicarbonate transporter. The protein is Rhesus-like glycoprotein B (rhgB) of Dictyostelium discoideum (Social amoeba).